A 1043-amino-acid chain; its full sequence is Beta-klotho (1043 aa).

Over 1-994 (MKTGCAAGSP…ICSFLVEKKP (994 aa)) the chain is Extracellular. 2 glycosyl hydrolase-1 regions span residues 77-506 (LYDT…DNGF) and 515-965 (MKGR…SSGL). Asn-84, Asn-122, Asn-161, Asn-211, Asn-262, Asn-308, Asn-389, Asn-552, Asn-609, Asn-700, Asn-704, and Asn-837 each carry an N-linked (GlcNAc...) asparagine glycan. A helical membrane pass occupies residues 995–1015 (LIFFGCCFISTLAVLLSITVF). At 1016 to 1043 (HHQKRRKFQKARNLQNIPLKKGHSRVFS) the chain is on the cytoplasmic side.

It belongs to the glycosyl hydrolase 1 family. Klotho subfamily. In terms of assembly, interacts with FGF19; this interaction is direct. Interacts (via C-terminus) with FGF21; this interaction is direct. Interacts with FGFR1 and FGFR4. As to expression, present in liver, muscle and white adipose tissue, but not in kidney (at protein level). Expressed in liver and pancreas, and at lower levels in skin, stomach, skeletal muscle, small intestine and lung.

The protein localises to the cell membrane. Its function is as follows. Contributes to the transcriptional repression of cholesterol 7-alpha-hydroxylase (CYP7A1), the rate-limiting enzyme in bile acid synthesis. Probably inactive as a glycosidase. Increases the ability of FGFR1 and FGFR4 to bind FGF21. This Mus musculus (Mouse) protein is Beta-klotho (Klb).